Here is a 442-residue protein sequence, read N- to C-terminus: Chromosomal replication initiator protein DnaA (442 aa).

Residues 1–84 (MSVLWSHCIS…LEIGSRAAEA (84 aa)) form a domain I, interacts with DnaA modulators region. The tract at residues 84–105 (AAQMRSANPPRKTAPARKQVPN) is domain II. Positions 106–322 (NLNSAFIFGN…GALRRVIANA (217 aa)) are domain III, AAA+ region. ATP contacts are provided by glycine 150, glycine 152, lysine 153, and threonine 154. Positions 323-442 (QFTGRPITLE…FSNLLRILSN (120 aa)) are domain IV, binds dsDNA.

The protein belongs to the DnaA family. Oligomerizes as a right-handed, spiral filament on DNA at oriC.

The protein localises to the cytoplasm. Plays an essential role in the initiation and regulation of chromosomal replication. ATP-DnaA binds to the origin of replication (oriC) to initiate formation of the DNA replication initiation complex once per cell cycle. Binds the DnaA box (a 9 base pair repeat at the origin) and separates the double-stranded (ds)DNA. Forms a right-handed helical filament on oriC DNA; dsDNA binds to the exterior of the filament while single-stranded (ss)DNA is stabiized in the filament's interior. The ATP-DnaA-oriC complex binds and stabilizes one strand of the AT-rich DNA unwinding element (DUE), permitting loading of DNA polymerase. After initiation quickly degrades to an ADP-DnaA complex that is not apt for DNA replication. Binds acidic phospholipids. This chain is Chromosomal replication initiator protein DnaA, found in Methylococcus capsulatus (strain ATCC 33009 / NCIMB 11132 / Bath).